The sequence spans 115 residues: Macrophage migration inhibitory factor homolog (115 aa).

The Proton acceptor; via imino nitrogen role is filled by proline 2. The substrate site is built by lysine 33 and isoleucine 65.

The protein belongs to the MIF family.

It localises to the secreted. It carries out the reaction L-dopachrome = 5,6-dihydroxyindole-2-carboxylate. It catalyses the reaction 3-phenylpyruvate = enol-phenylpyruvate. Its function is as follows. Tautomerization of the methyl ester of L-dopachrome. Inhibits migration of human peripheral blood mononuclear cells. The chain is Macrophage migration inhibitory factor homolog from Brugia malayi (Filarial nematode worm).